We begin with the raw amino-acid sequence, 1231 residues long: Pesticidal crystal protein Cry1Bd (1231 aa).

The protein belongs to the delta endotoxin family.

In terms of biological role, promotes colloidosmotic lysis by binding to the midgut epithelial cells of lepidopteran larvae. Toxic to Plutella xylostella. The protein is Pesticidal crystal protein Cry1Bd (cry1Bd) of Bacillus thuringiensis subsp. wuhanensis.